A 140-amino-acid chain; its full sequence is FAD synthase (140 aa).

Residues 9–10 (TF), 14–17 (HPGH), and D92 each bind ATP.

This sequence belongs to the archaeal FAD synthase family. In terms of assembly, homodimer. Requires a divalent metal cation as cofactor.

It catalyses the reaction FMN + ATP + H(+) = FAD + diphosphate. It participates in cofactor biosynthesis; FAD biosynthesis; FAD from FMN: step 1/1. Its function is as follows. Catalyzes the transfer of the AMP portion of ATP to flavin mononucleotide (FMN) to produce flavin adenine dinucleotide (FAD) coenzyme. The polypeptide is FAD synthase (Natronomonas pharaonis (strain ATCC 35678 / DSM 2160 / CIP 103997 / JCM 8858 / NBRC 14720 / NCIMB 2260 / Gabara) (Halobacterium pharaonis)).